Here is a 252-residue protein sequence, read N- to C-terminus: Triosephosphate isomerase (252 aa).

9–11 contacts substrate; sequence NWK. The Electrophile role is filled by H95. E167 serves as the catalytic Proton acceptor. Residues G173, S213, and 234 to 235 contribute to the substrate site; that span reads GG.

Belongs to the triosephosphate isomerase family. In terms of assembly, homodimer.

Its subcellular location is the cytoplasm. It catalyses the reaction D-glyceraldehyde 3-phosphate = dihydroxyacetone phosphate. It functions in the pathway carbohydrate biosynthesis; gluconeogenesis. It participates in carbohydrate degradation; glycolysis; D-glyceraldehyde 3-phosphate from glycerone phosphate: step 1/1. Functionally, involved in the gluconeogenesis. Catalyzes stereospecifically the conversion of dihydroxyacetone phosphate (DHAP) to D-glyceraldehyde-3-phosphate (G3P). This chain is Triosephosphate isomerase, found in Syntrophotalea carbinolica (strain DSM 2380 / NBRC 103641 / GraBd1) (Pelobacter carbinolicus).